Reading from the N-terminus, the 417-residue chain is Gamma-glutamyl phosphate reductase (417 aa).

The protein belongs to the gamma-glutamyl phosphate reductase family.

The protein localises to the cytoplasm. The catalysed reaction is L-glutamate 5-semialdehyde + phosphate + NADP(+) = L-glutamyl 5-phosphate + NADPH + H(+). It participates in amino-acid biosynthesis; L-proline biosynthesis; L-glutamate 5-semialdehyde from L-glutamate: step 2/2. Functionally, catalyzes the NADPH-dependent reduction of L-glutamate 5-phosphate into L-glutamate 5-semialdehyde and phosphate. The product spontaneously undergoes cyclization to form 1-pyrroline-5-carboxylate. In Hydrogenovibrio crunogenus (strain DSM 25203 / XCL-2) (Thiomicrospira crunogena), this protein is Gamma-glutamyl phosphate reductase.